The primary structure comprises 573 residues: Sulfite reductase [NADPH] hemoprotein beta-component (573 aa).

[4Fe-4S] cluster-binding residues include C438, C444, C483, and C487. C487 is a binding site for siroheme.

It belongs to the nitrite and sulfite reductase 4Fe-4S domain family. As to quaternary structure, alpha(8)-beta(8). The alpha component is a flavoprotein, the beta component is a hemoprotein. The cofactor is siroheme. Requires [4Fe-4S] cluster as cofactor.

The catalysed reaction is hydrogen sulfide + 3 NADP(+) + 3 H2O = sulfite + 3 NADPH + 4 H(+). Its pathway is sulfur metabolism; hydrogen sulfide biosynthesis; hydrogen sulfide from sulfite (NADPH route): step 1/1. Functionally, component of the sulfite reductase complex that catalyzes the 6-electron reduction of sulfite to sulfide. This is one of several activities required for the biosynthesis of L-cysteine from sulfate. The sequence is that of Sulfite reductase [NADPH] hemoprotein beta-component from Staphylococcus haemolyticus (strain JCSC1435).